The primary structure comprises 63 residues: Small ribosomal subunit protein eS27 (63 aa).

Zn(2+) is bound by residues Cys18, Cys21, Cys37, and Cys40. The segment at Cys18 to Cys40 adopts a C4-type zinc-finger fold.

This sequence belongs to the eukaryotic ribosomal protein eS27 family. Part of the 30S ribosomal subunit. Requires Zn(2+) as cofactor.

This is Small ribosomal subunit protein eS27 from Methanothermobacter thermautotrophicus (strain ATCC 29096 / DSM 1053 / JCM 10044 / NBRC 100330 / Delta H) (Methanobacterium thermoautotrophicum).